Consider the following 284-residue polypeptide: 2-dehydro-3-deoxyphosphooctonate aldolase (284 aa).

This sequence belongs to the KdsA family.

The protein resides in the cytoplasm. It catalyses the reaction D-arabinose 5-phosphate + phosphoenolpyruvate + H2O = 3-deoxy-alpha-D-manno-2-octulosonate-8-phosphate + phosphate. It participates in carbohydrate biosynthesis; 3-deoxy-D-manno-octulosonate biosynthesis; 3-deoxy-D-manno-octulosonate from D-ribulose 5-phosphate: step 2/3. The protein operates within bacterial outer membrane biogenesis; lipopolysaccharide biosynthesis. The sequence is that of 2-dehydro-3-deoxyphosphooctonate aldolase from Salmonella enteritidis PT4 (strain P125109).